Reading from the N-terminus, the 265-residue chain is HUWE1-associated protein modifying stress responses (265 aa).

Disordered stretches follow at residues 1–22 (MEDK…HWFS), 145–170 (RNSR…GSSV), 195–218 (VRSS…RRNG), and 240–265 (GTRK…NRMI). Polar residues-rich tracts occupy residues 156 to 170 (VSPN…GSSV) and 195 to 212 (VRSS…SSNT).

Belongs to the HAPSTR1 family. As to quaternary structure, oligomer.

Its subcellular location is the nucleus. It is found in the cytoplasm. In terms of biological role, acts as a central player within a network of stress response pathways promoting cellular adaptability. Functions as a negative regulator of TP53/P53 in the cellular response to telomere erosion and probably also DNA damage. The protein is HUWE1-associated protein modifying stress responses of Xenopus tropicalis (Western clawed frog).